Reading from the N-terminus, the 242-residue chain is Type III pantothenate kinase (242 aa).

5 to 12 contributes to the ATP binding site; sequence DLGNTRLK. Substrate is bound by residues Tyr94 and 100–103; that span reads GCDR. The active-site Proton acceptor is the Asp102. Thr124 is a binding site for ATP. Thr175 is a substrate binding site.

This sequence belongs to the type III pantothenate kinase family. Homodimer. It depends on NH4(+) as a cofactor. K(+) serves as cofactor.

It localises to the cytoplasm. The catalysed reaction is (R)-pantothenate + ATP = (R)-4'-phosphopantothenate + ADP + H(+). Its pathway is cofactor biosynthesis; coenzyme A biosynthesis; CoA from (R)-pantothenate: step 1/5. Its function is as follows. Catalyzes the phosphorylation of pantothenate (Pan), the first step in CoA biosynthesis. This chain is Type III pantothenate kinase, found in Psychrobacter cryohalolentis (strain ATCC BAA-1226 / DSM 17306 / VKM B-2378 / K5).